Reading from the N-terminus, the 1275-residue chain is Streptococcal hemoprotein receptor (1275 aa).

A signal peptide spans 1-26 (MKKISKCAFVAISALVLIQATQTVKS). Residues 61 to 123 (GKEYYKHIEK…KKDGDILITF (63 aa)) are HID 1. Thr87, Arg196, Tyr197, and Met238 together coordinate heme. An HID 2 region spans residues 203–269 (IKALTQQITK…KGFEDVTITV (67 aa)). One can recognise an NEAT 1 domain in the interval 369–501 (LTEGTYTLNF…DMTFSKTVTK (133 aa)). LRR repeat units lie at residues 544–567 (LEQI…LKHA), 568–590 (KNIT…LFSQ), 592–614 (KQLR…TFKS), 616–638 (AQLR…LFQS), 639–662 (LHHL…PFEG), 664–686 (SRLT…ALEP), 687–710 (LTSL…IEKL), 712–733 (ALST…SFKN), 734–757 (LPKL…IFKQ), 759–781 (NQLT…VFPD), and 783–804 (ETLN…VRAL). The region spanning 976 to 1138 (LRDGIYYLNA…TTEKAKVVKE (163 aa)) is the NEAT 2 domain. 3 disordered regions span residues 1137-1174 (KETN…SAAT), 1186-1205 (KATG…DKAE), and 1210-1248 (LVRD…ESSS). Positions 1138–1166 (ETNNPQENSHLTSTDQLKGPQNRQQEKTP) are enriched in polar residues. Composition is skewed to basic and acidic residues over residues 1196 to 1205 (SKTDDTDKAE) and 1210 to 1229 (LVRD…TKTK). Residues 1250 to 1269 (YHLIAGLSSFMIVALGFIIG) form a helical membrane-spanning segment.

It is found in the cell membrane. May modulate heme uptake according to heme availability. In the presence of high heme concentrations, NEAT 1 facilitates fast heme delivery to Shp, whereas NEAT 2 serves as a temporary storage for heme on the bacterial surface. When heme availability is limiting, heme from NEAT 2 is transferred back to NEAT 1 and from there to Shp. Hemoprotein receptor that plays a central role in the acquisition of host heme, a source of iron during bacterial infection, and is therefore an important virulence factor. Captures host hemoproteins and their iron-containing heme molecules, and transfers the heme to the cell surface heme-binding protein Shp. Plays a pivotal role in iron acquisition and growth under iron-starvation conditions. Uses a cap and release mechanism in which Shr forms a dynamic complex with hemoglobin that enables the gated release of its most labile heme molecule. This mechanism exploits the hemoglobin beta subunit's inherent weaker affinity for heme, allowing S.pyogenes to preferentially capture only heme-saturated forms of hemoglobin that contain iron. In vitro, binds directly to a variety of heme-containing proteins, including hemoglobin, myoglobin, heme albumin and the hemoglobin-haptoglobin complex. It also binds to and acquires heme from methemoglobin, the ferric form of hemoglobin, which is likely to be a physiologically relevant heme source for the hemolytic group A streptococcus (GAS). Seems to have an inherent ability to reduce the ferric heme present in methemoglobin to ferrous heme and to provide a stable environment for the produced ferrous complex. Does not bind apohemoglobin, apohaptoglobin, fibrinogen or streptavidin, indicating that it specifically recognizes hemoproteins. Functionally, in addition to its role in heme acquisition, functions as an adhesin, contributing to host cell adhesion and hence virulence. Specifically binds to extracellular matrix (ECM) components, including fibronectin and laminin, and mediates bacterial attachment to host epithelial cells. The chain is Streptococcal hemoprotein receptor from Streptococcus pyogenes serotype M1.